A 192-amino-acid chain; its full sequence is Cytidylate kinase (192 aa).

7–15 (GPPGSGKST) is an ATP binding site.

This sequence belongs to the cytidylate kinase family. Type 2 subfamily.

It localises to the cytoplasm. The catalysed reaction is CMP + ATP = CDP + ADP. It carries out the reaction dCMP + ATP = dCDP + ADP. This Halorubrum lacusprofundi (strain ATCC 49239 / DSM 5036 / JCM 8891 / ACAM 34) protein is Cytidylate kinase.